A 293-amino-acid chain; its full sequence is ATP synthase gamma chain (293 aa).

The protein belongs to the ATPase gamma chain family. In terms of assembly, F-type ATPases have 2 components, CF(1) - the catalytic core - and CF(0) - the membrane proton channel. CF(1) has five subunits: alpha(3), beta(3), gamma(1), delta(1), epsilon(1). CF(0) has three main subunits: a, b and c.

The protein resides in the cell inner membrane. Functionally, produces ATP from ADP in the presence of a proton gradient across the membrane. The gamma chain is believed to be important in regulating ATPase activity and the flow of protons through the CF(0) complex. This chain is ATP synthase gamma chain, found in Nitrosospira multiformis (strain ATCC 25196 / NCIMB 11849 / C 71).